The following is a 177-amino-acid chain: Large ribosomal subunit protein uL6 (177 aa).

It belongs to the universal ribosomal protein uL6 family. In terms of assembly, part of the 50S ribosomal subunit.

This protein binds to the 23S rRNA, and is important in its secondary structure. It is located near the subunit interface in the base of the L7/L12 stalk, and near the tRNA binding site of the peptidyltransferase center. The protein is Large ribosomal subunit protein uL6 of Alkalilimnicola ehrlichii (strain ATCC BAA-1101 / DSM 17681 / MLHE-1).